Consider the following 331-residue polypeptide: Putative mitochondrial 2-oxoglutarate/malate carrier protein (331 aa).

Solcar repeat units lie at residues 39–128, 140–231, and 239–329; these read VRAA…FMSR, VGFK…AKAQ, and SSKV…LGWL. Helical transmembrane passes span 42 to 62, 103 to 121, 148 to 168, 199 to 219, 245 to 265, and 309 to 329; these read ALPF…IQPI, GLSA…RIGC, AGLA…LALI, GVAA…ALNF, LSAS…FDFV, and YVRI…LGWL.

It belongs to the mitochondrial carrier (TC 2.A.29) family.

The protein localises to the mitochondrion inner membrane. Its function is as follows. Catalyzes the transport of 2-oxoglutarate across the inner mitochondrial membrane. The chain is Putative mitochondrial 2-oxoglutarate/malate carrier protein (mic-33) from Neurospora crassa (strain ATCC 24698 / 74-OR23-1A / CBS 708.71 / DSM 1257 / FGSC 987).